The chain runs to 124 residues: Small ribosomal subunit protein uS12 (124 aa).

3-methylthioaspartic acid is present on Asp-89.

The protein belongs to the universal ribosomal protein uS12 family. As to quaternary structure, part of the 30S ribosomal subunit. Contacts proteins S8 and S17. May interact with IF1 in the 30S initiation complex.

In terms of biological role, with S4 and S5 plays an important role in translational accuracy. Its function is as follows. Interacts with and stabilizes bases of the 16S rRNA that are involved in tRNA selection in the A site and with the mRNA backbone. Located at the interface of the 30S and 50S subunits, it traverses the body of the 30S subunit contacting proteins on the other side and probably holding the rRNA structure together. The combined cluster of proteins S8, S12 and S17 appears to hold together the shoulder and platform of the 30S subunit. The chain is Small ribosomal subunit protein uS12 from Tolumonas auensis (strain DSM 9187 / NBRC 110442 / TA 4).